The primary structure comprises 330 residues: Beta-1,6-galactofuranosyltransferase WbbI (330 aa).

The protein resides in the cytoplasm. It participates in bacterial outer membrane biogenesis; lipopolysaccharide biosynthesis. Involved in the transfer of galactofuranose (Galf) onto an alpha-D-gluco-configured acceptor substrate to form a beta-1,6-linkage. It uses n-octyl alpha-D-glucopyranoside as an acceptor substrate for the addition of galactofuranose from the donor substrate UDP-galactofuranose. It is not able to use beta-D-glucopyranoside isomers. The protein is Beta-1,6-galactofuranosyltransferase WbbI (wbbI) of Escherichia coli (strain K12).